The primary structure comprises 373 residues: Chaperone protein DnaJ (373 aa).

A J domain is found at 5–71; it reads DYYEILGVSR…EKRAMYDKFG (67 aa). The segment at 144–226 adopts a CR-type zinc-finger fold; the sequence is GVKIPLEYDR…CGGTGRIRKR (83 aa). Zn(2+)-binding residues include cysteine 157, cysteine 160, cysteine 174, cysteine 177, cysteine 200, cysteine 203, cysteine 214, and cysteine 217. CXXCXGXG motif repeat units lie at residues 157–164, 174–181, 200–207, and 214–221; these read CEHCHGEG, CPKCHGTG, CNQCGGTG, and CRVCGGTG.

The protein belongs to the DnaJ family. Homodimer. The cofactor is Zn(2+).

The protein resides in the cytoplasm. In terms of biological role, participates actively in the response to hyperosmotic and heat shock by preventing the aggregation of stress-denatured proteins and by disaggregating proteins, also in an autonomous, DnaK-independent fashion. Unfolded proteins bind initially to DnaJ; upon interaction with the DnaJ-bound protein, DnaK hydrolyzes its bound ATP, resulting in the formation of a stable complex. GrpE releases ADP from DnaK; ATP binding to DnaK triggers the release of the substrate protein, thus completing the reaction cycle. Several rounds of ATP-dependent interactions between DnaJ, DnaK and GrpE are required for fully efficient folding. Also involved, together with DnaK and GrpE, in the DNA replication of plasmids through activation of initiation proteins. The sequence is that of Chaperone protein DnaJ from Thermosipho melanesiensis (strain DSM 12029 / CIP 104789 / BI429).